The primary structure comprises 85 residues: Conotoxin Lt28.2 (85 aa).

Positions 1–21 (MPKLEMMLLVLLILPLCYIDA) are cleaved as a signal peptide. The propeptide occupies 22–40 (VGPPPPWNMEDEIIEHWQK).

The protein belongs to the conotoxin D superfamily. Post-translationally, contains 5 disulfide bonds. As to expression, expressed by the venom duct.

The protein localises to the secreted. Functionally, probable neurotoxin. The protein is Conotoxin Lt28.2 of Conus litteratus (Lettered cone).